Here is a 975-residue protein sequence, read N- to C-terminus: MVAINSVSNYLSLLDEDQLELKSYSLEKLDSCVDEFWSEIASSSIDKIKSLSVNKQFPKHELASLVLSKVYYNLSDFPNSMEYALSAGSLFNVLSKSEYIETLLYKFIDEYIKLRTSTNKDTVINPHLESIVMGMFDRCFKEGSYKQALGIAIEARRLDIIEKAISQSGNVNSMLSYCLHICNVSVNNRHFRHSVLGILVNLHLAQEKPDYLSVVQCLIFLDNHIEVATILLSLIKKDEESLLLAYQIGFDLFQNSTQQFLLNVRNRLPPVEKKSTTTTTTTPASDSMEIDIDSGNEKSGGSSSFEQRLERLHSILIGDVSIGMNLEFLYRNCSTDMHILQSMKTTSELHKGAIFYSGTLFANALMHAGTTRDTFLRSNIEWLYKSTHWTKFSAISSLGVINKGHIKESKSLLKTYLPGASVNQTPYSESGSLYALGLIHASHGEEIIDYLVEKLHINNAILHHGASLGLGLAAMATGRDDLYEDLKSVLYNDDAVSGEAAGLAMGLVMLGSGAKKAIEEMLAYAHETQHEKTIRSLSMGLAFLMYGKEESADTLIEQMIGDKDPLIRYGGMYAIAFAYCGTGHNDALRKLLHVAVSDGTDSVRRAAVTCIGFVLSRQPEKCPKAIALLAESYNPHVRYGAAFALGIACAGTGQRDALEILKSLTTDSVGYVKQAAWISMAMVLIQTSKELVPEAETARKLFATCISDKREDSMSKFGAVLAFGVIDAGGRNSTIQLHSPSGHKNMNAIVGIAGFLQFWYWFPMTHFMGLALTPTSIIGLNKNLEMPVFTFKSNCRPSLFAYPPETKPSTTSSTNKIETAILSYSRKNKLQSSRSAMNIDQDVEKKEKEEKEAKEKEAKEKEEKEAAKAEEKEPLFERKSNPARIVPRQLQYVQFDDARYQPIKKSPAIGIVMLRDLTPNEPEQLVVKEKPETKQETVGNQSGTATATASLPNATTTTSPTLPEPSTPEPFEFTE.

Positions 272 to 303 (EKKSTTTTTTTPASDSMEIDIDSGNEKSGGSS) are disordered. PC repeat units follow at residues 393–426 (SAIS…NQTP), 431–464 (GSLY…ILHH), 465–499 (GASL…VSGE), 500–534 (AAGL…EKTI), 536–569 (SLSM…LIRY), 570–605 (GGMY…SVRR), 606–638 (AAVT…PHVR), 640–674 (GAAF…YVKQ), 675–715 (AAWI…DSMS), and 718–748 (GAVL…NMNA). 2 disordered regions span residues 832–882 (SSRS…KSNP) and 922–975 (PEQL…EFTE). Composition is skewed to basic and acidic residues over residues 842–880 (DVEK…ERKS) and 926–935 (VVKEKPETKQ). Over residues 944-961 (TATATASLPNATTTTSPT) the composition is skewed to low complexity.

Belongs to the proteasome subunit S1 family.

Its function is as follows. Acts as a regulatory subunit of the 26 proteasome which is involved in the ATP-dependent degradation of ubiquitinated proteins. The protein is 26S proteasome non-ATPase regulatory subunit 1 (psmD1) of Dictyostelium discoideum (Social amoeba).